A 103-amino-acid polypeptide reads, in one-letter code: uncharacterized protein (103 aa).

Helical transmembrane passes span 12–34 (GFSW…LTIS), 49–66 (TLMS…ALIA), and 79–101 (FARG…VAGG).

The protein localises to the cell membrane. This is an uncharacterized protein from Pasteurella multocida (strain Pm70).